The following is a 616-amino-acid chain: MPKYRSATTTHGRNMAGARALWRATGMTDSDFGKPIIAVVNSFTQFVPGHVHLRDLGKLVAEQIEASGGVAKEFNTIAVDDGIAMGHGGMLYSLPSRELIADSVEYMVNAHCADAMVCISNCDKITPGMLMASLRLNIPVIFVSGGPMEAGKTKLSDKIIKLDLVDAMIQGADPKVSDDQSNQVERSACPTCGSCSGMFTANSMNCLTEALGLSQPGNGSLLATHADRKQLFLNAGKRIVELTKRYYEQNDESALPRNIASKAAFENAMTLDIAMGGSTNTVLHLLAAAQEAEIDFTMSDIDKLSRKVPQLCKVAPSTQKYHMEDVHRAGGVLGILGELDRAGLLNCNVKNVLGLTLPQTLEQYDITVTQDEAVKKMFRAGPAGIRTTQAFSQDCRWDSLDDDRSAGCIRSLEYAYSKDGGLAVLYGNFAENGCIVKTAGVDDSILKFTGPAKVYESQDDAVEAILGGKVVEGDVVVIRYEGPKGGPGMQEMLYPTSFLKSMGLGKACALITDGRFSGGTSGLSIGHVSPEAASGGTIALIEDGDTIAIDIPNRSIQLQLNEAEIAARREAQEARGDKAWTPKNRQRQVSFALRAYASLATSADKGAVRDKSKLGG.

Residue Asp81 participates in Mg(2+) binding. A [2Fe-2S] cluster-binding site is contributed by Cys122. Positions 123 and 124 each coordinate Mg(2+). An N6-carboxylysine modification is found at Lys124. Residue Cys195 coordinates [2Fe-2S] cluster. Glu491 is a Mg(2+) binding site. The active-site Proton acceptor is the Ser517.

It belongs to the IlvD/Edd family. In terms of assembly, homodimer. [2Fe-2S] cluster is required as a cofactor. Requires Mg(2+) as cofactor.

It catalyses the reaction (2R)-2,3-dihydroxy-3-methylbutanoate = 3-methyl-2-oxobutanoate + H2O. It carries out the reaction (2R,3R)-2,3-dihydroxy-3-methylpentanoate = (S)-3-methyl-2-oxopentanoate + H2O. The protein operates within amino-acid biosynthesis; L-isoleucine biosynthesis; L-isoleucine from 2-oxobutanoate: step 3/4. It functions in the pathway amino-acid biosynthesis; L-valine biosynthesis; L-valine from pyruvate: step 3/4. Functions in the biosynthesis of branched-chain amino acids. Catalyzes the dehydration of (2R,3R)-2,3-dihydroxy-3-methylpentanoate (2,3-dihydroxy-3-methylvalerate) into 2-oxo-3-methylpentanoate (2-oxo-3-methylvalerate) and of (2R)-2,3-dihydroxy-3-methylbutanoate (2,3-dihydroxyisovalerate) into 2-oxo-3-methylbutanoate (2-oxoisovalerate), the penultimate precursor to L-isoleucine and L-valine, respectively. The protein is Dihydroxy-acid dehydratase of Salmonella gallinarum (strain 287/91 / NCTC 13346).